A 379-amino-acid chain; its full sequence is MTASAVLDLVKDLIARPSVTPDDVDCQMLLAQRLERIGFQCETIARGGVTNLWARRGAGAPLTVFAGHTDVVPPGPRDKWDSDPFVPTERDGFLYGRGAADMKSSIAAFVVAAEEFVAVHPEHPGSIALLITSDEEGPAVDGTVIVCDELRQRGEQLDYCIVGEPTSTEALGDVCKNGRRGSLSGRLLVKGVQGHVAYPHLARNPVHQLAPALTELVAIEWDQGNEYFPPTTFQVSNLHAGTGATNVVPGEAVALFNFRFSTASTPGQLKARVHEVLDRHGLEYQLDWELGGEPFLTPRGSLTDALVSAIQAETGLQAELSTTGGTSDGRFIARICPQVIEFGPCNATIHKVNERIELSSLAPLKNIYRRTLENLLLAD.

His-68 lines the Zn(2+) pocket. Asp-70 is a catalytic residue. Asp-101 contributes to the Zn(2+) binding site. Glu-135 serves as the catalytic Proton acceptor. Residues Glu-136, Glu-164, and His-350 each coordinate Zn(2+).

It belongs to the peptidase M20A family. DapE subfamily. As to quaternary structure, homodimer. Zn(2+) serves as cofactor. Co(2+) is required as a cofactor.

The enzyme catalyses N-succinyl-(2S,6S)-2,6-diaminopimelate + H2O = (2S,6S)-2,6-diaminopimelate + succinate. Its pathway is amino-acid biosynthesis; L-lysine biosynthesis via DAP pathway; LL-2,6-diaminopimelate from (S)-tetrahydrodipicolinate (succinylase route): step 3/3. Catalyzes the hydrolysis of N-succinyl-L,L-diaminopimelic acid (SDAP), forming succinate and LL-2,6-diaminopimelate (DAP), an intermediate involved in the bacterial biosynthesis of lysine and meso-diaminopimelic acid, an essential component of bacterial cell walls. In Bordetella pertussis (strain Tohama I / ATCC BAA-589 / NCTC 13251), this protein is Succinyl-diaminopimelate desuccinylase.